Consider the following 934-residue polypeptide: DNA topoisomerase 1 (934 aa).

Residues 1–20 are disordered; it reads MADPKTKGRGSGGNGSGRRL. Positions 18 to 142 constitute a Toprim domain; that stretch reads RRLVIVESPT…VKRMVFHEIT (125 aa). Residues Glu-24 and Asp-111 each coordinate Mg(2+). The Topo IA-type catalytic domain maps to 157–616; it reads DIDLVDAQET…FYFGGDHGVP (460 aa). An interaction with DNA region spans residues 191-196; it reads SAGRVQ. The active-site O-(5'-phospho-DNA)-tyrosine intermediate is the Tyr-342. Disordered stretches follow at residues 746–765, 842–892, and 905–934; these read AAQG…RTGS, KRRG…KGDD, and LADR…AKRD. A compositionally biased stretch (basic residues) spans 911–934; sequence RGPAKRPARKAARKVPAKKAAKRD.

It belongs to the type IA topoisomerase family. In terms of assembly, monomer. Mg(2+) serves as cofactor.

It catalyses the reaction ATP-independent breakage of single-stranded DNA, followed by passage and rejoining.. In terms of biological role, releases the supercoiling and torsional tension of DNA, which is introduced during the DNA replication and transcription, by transiently cleaving and rejoining one strand of the DNA duplex. Introduces a single-strand break via transesterification at a target site in duplex DNA. The scissile phosphodiester is attacked by the catalytic tyrosine of the enzyme, resulting in the formation of a DNA-(5'-phosphotyrosyl)-enzyme intermediate and the expulsion of a 3'-OH DNA strand. The free DNA strand then undergoes passage around the unbroken strand, thus removing DNA supercoils. Finally, in the religation step, the DNA 3'-OH attacks the covalent intermediate to expel the active-site tyrosine and restore the DNA phosphodiester backbone. The chain is DNA topoisomerase 1 from Mycobacterium bovis (strain ATCC BAA-935 / AF2122/97).